The sequence spans 96 residues: ATP synthase subunit c (96 aa).

2 consecutive transmembrane segments (helical) span residues 9–29 and 58–78; these read FIACVTAAGFGIAIAAFGCGI and IGLAMIESLCIYALVVALILI.

Belongs to the ATPase C chain family. As to quaternary structure, F-type ATPases have 2 components, F(1) - the catalytic core - and F(0) - the membrane proton channel. F(1) has five subunits: alpha(3), beta(3), gamma(1), delta(1), epsilon(1). F(0) has three main subunits: a(1), b(2) and c(10-14). The alpha and beta chains form an alternating ring which encloses part of the gamma chain. F(1) is attached to F(0) by a central stalk formed by the gamma and epsilon chains, while a peripheral stalk is formed by the delta and b chains.

It is found in the cell inner membrane. Its function is as follows. F(1)F(0) ATP synthase produces ATP from ADP in the presence of a proton or sodium gradient. F-type ATPases consist of two structural domains, F(1) containing the extramembraneous catalytic core and F(0) containing the membrane proton channel, linked together by a central stalk and a peripheral stalk. During catalysis, ATP synthesis in the catalytic domain of F(1) is coupled via a rotary mechanism of the central stalk subunits to proton translocation. Key component of the F(0) channel; it plays a direct role in translocation across the membrane. A homomeric c-ring of between 10-14 subunits forms the central stalk rotor element with the F(1) delta and epsilon subunits. The polypeptide is ATP synthase subunit c (Desulfosudis oleivorans (strain DSM 6200 / JCM 39069 / Hxd3) (Desulfococcus oleovorans)).